A 490-amino-acid polypeptide reads, in one-letter code: Glutamate--tRNA ligase (490 aa).

Residues 9 to 19 (PSPTGLQHIGG) carry the 'HIGH' region motif. Residues 251-255 (KLSKR) carry the 'KMSKS' region motif. Lysine 254 serves as a coordination point for ATP.

This sequence belongs to the class-I aminoacyl-tRNA synthetase family. Glutamate--tRNA ligase type 1 subfamily. Monomer.

Its subcellular location is the cytoplasm. The catalysed reaction is tRNA(Glu) + L-glutamate + ATP = L-glutamyl-tRNA(Glu) + AMP + diphosphate. Its function is as follows. Catalyzes the attachment of glutamate to tRNA(Glu) in a two-step reaction: glutamate is first activated by ATP to form Glu-AMP and then transferred to the acceptor end of tRNA(Glu). This is Glutamate--tRNA ligase from Borreliella burgdorferi (strain ATCC 35210 / DSM 4680 / CIP 102532 / B31) (Borrelia burgdorferi).